The primary structure comprises 274 residues: Glutamate racemase (274 aa).

Substrate contacts are provided by residues 9–10 (DS) and 41–42 (YG). The active-site Proton donor/acceptor is Cys-73. Residue 74-75 (NT) participates in substrate binding. Cys-183 acts as the Proton donor/acceptor in catalysis. 184-185 (TH) is a binding site for substrate.

It belongs to the aspartate/glutamate racemases family.

The catalysed reaction is L-glutamate = D-glutamate. The protein operates within cell wall biogenesis; peptidoglycan biosynthesis. In terms of biological role, provides the (R)-glutamate required for cell wall biosynthesis. This Shewanella baltica (strain OS185) protein is Glutamate racemase.